The chain runs to 348 residues: Phosphoribosylformylglycinamidine cyclo-ligase (348 aa).

It belongs to the AIR synthase family.

Its subcellular location is the cytoplasm. It catalyses the reaction 2-formamido-N(1)-(5-O-phospho-beta-D-ribosyl)acetamidine + ATP = 5-amino-1-(5-phospho-beta-D-ribosyl)imidazole + ADP + phosphate + H(+). Its pathway is purine metabolism; IMP biosynthesis via de novo pathway; 5-amino-1-(5-phospho-D-ribosyl)imidazole from N(2)-formyl-N(1)-(5-phospho-D-ribosyl)glycinamide: step 2/2. The sequence is that of Phosphoribosylformylglycinamidine cyclo-ligase from Geobacter metallireducens (strain ATCC 53774 / DSM 7210 / GS-15).